The following is a 278-amino-acid chain: Hydroxyethylthiazole kinase (278 aa).

Met51 serves as a coordination point for substrate. Arg127 and Ser173 together coordinate ATP. Gly201 is a substrate binding site.

This sequence belongs to the Thz kinase family. Mg(2+) is required as a cofactor.

It carries out the reaction 5-(2-hydroxyethyl)-4-methylthiazole + ATP = 4-methyl-5-(2-phosphooxyethyl)-thiazole + ADP + H(+). It functions in the pathway cofactor biosynthesis; thiamine diphosphate biosynthesis; 4-methyl-5-(2-phosphoethyl)-thiazole from 5-(2-hydroxyethyl)-4-methylthiazole: step 1/1. In terms of biological role, catalyzes the phosphorylation of the hydroxyl group of 4-methyl-5-beta-hydroxyethylthiazole (THZ). In Leptothrix cholodnii (strain ATCC 51168 / LMG 8142 / SP-6) (Leptothrix discophora (strain SP-6)), this protein is Hydroxyethylthiazole kinase.